The primary structure comprises 445 residues: Trigger factor (445 aa).

Residues 162-247 form the PPIase FKBP-type domain; it reads GDQVTIDAIG…IKAVHTAEPT (86 aa).

Belongs to the FKBP-type PPIase family. Tig subfamily.

The protein resides in the cytoplasm. It catalyses the reaction [protein]-peptidylproline (omega=180) = [protein]-peptidylproline (omega=0). Involved in protein export. Acts as a chaperone by maintaining the newly synthesized protein in an open conformation. Functions as a peptidyl-prolyl cis-trans isomerase. In Rickettsia rickettsii (strain Sheila Smith), this protein is Trigger factor.